The sequence spans 433 residues: Phosphomethylpyrimidine synthase 1 (433 aa).

Residues Met95, Tyr124, His163, 185 to 187 (SRG), 226 to 229 (NAMR), and Glu265 each bind substrate. A Zn(2+)-binding site is contributed by His269. Tyr292 is a binding site for substrate. His333 is a binding site for Zn(2+). Residues Cys408, Cys411, and Cys415 each contribute to the [4Fe-4S] cluster site.

Belongs to the ThiC family. The cofactor is [4Fe-4S] cluster.

The enzyme catalyses 5-amino-1-(5-phospho-beta-D-ribosyl)imidazole + S-adenosyl-L-methionine = 4-amino-2-methyl-5-(phosphooxymethyl)pyrimidine + CO + 5'-deoxyadenosine + formate + L-methionine + 3 H(+). Its pathway is cofactor biosynthesis; thiamine diphosphate biosynthesis. Its function is as follows. Catalyzes the synthesis of the hydroxymethylpyrimidine phosphate (HMP-P) moiety of thiamine from aminoimidazole ribotide (AIR) in a radical S-adenosyl-L-methionine (SAM)-dependent reaction. The polypeptide is Phosphomethylpyrimidine synthase 1 (Methanothermobacter thermautotrophicus (strain ATCC 29096 / DSM 1053 / JCM 10044 / NBRC 100330 / Delta H) (Methanobacterium thermoautotrophicum)).